We begin with the raw amino-acid sequence, 285 residues long: Protease HtpX homolog (285 aa).

2 helical membrane-spanning segments follow: residues 7–27 and 30–50; these read TAML…MIGG and GMTI…WFSD. His131 provides a ligand contact to Zn(2+). Residue Glu132 is part of the active site. His135 contacts Zn(2+). 2 helical membrane passes run 146–166 and 177–197; these read ISAT…FFGG and IAGI…QMAI. Position 202 (Glu202) interacts with Zn(2+).

This sequence belongs to the peptidase M48B family. Zn(2+) serves as cofactor.

The protein resides in the cell inner membrane. This Burkholderia mallei (strain NCTC 10247) protein is Protease HtpX homolog.